A 767-amino-acid polypeptide reads, in one-letter code: U3 small nucleolar RNA-associated protein 14 homolog A (767 aa).

The interval 23–49 (TSNYPLSASEDEGDSDGERKHQKLLEA) is disordered. Residues Ser29, Ser31, Ser37, Ser52, Ser77, and Ser81 each carry the phosphoserine modification. Lys122 is covalently cross-linked (Glycyl lysine isopeptide (Lys-Gly) (interchain with G-Cter in SUMO2)). Position 205 is a phosphothreonine (Thr205). The stretch at 317-346 (LEARQAMQEQLAKNKELTQKLQVVSESEEE) forms a coiled coil. A disordered region spans residues 338 to 554 (QVVSESEEEG…SKGKNKKEQM (217 aa)). Residues 342-355 (ESEEEGGADEEEAL) show a composition bias toward acidic residues. Residues 398–433 (AAHEFPENEENDKPVAEEDELLKELEKRRSLRKRSE) show a composition bias toward basic and acidic residues. Arg431 carries the post-translational modification Citrulline. Lys447 is covalently cross-linked (Glycyl lysine isopeptide (Lys-Gly) (interchain with G-Cter in SUMO2)). Ser451 carries the post-translational modification Phosphoserine. Residues 486–498 (VWEEEPAPEEDEP) show a composition bias toward acidic residues. A compositionally biased stretch (basic and acidic residues) spans 503–538 (RPERMRTLEELEELGKEDSLPNKERPRPSVEGEQVR). Residue Lys518 forms a Glycyl lysine isopeptide (Lys-Gly) (interchain with G-Cter in SUMO2) linkage. At Arg586 the chain carries Citrulline. Residues 730-767 (TAEDVDCRSSPRSDVPVMQSNPKQHSKHQKQRKKSSIG) form a disordered region. The segment covering 753-767 (QHSKHQKQRKKSSIG) has biased composition (basic residues).

This sequence belongs to the UTP14 family. In terms of assembly, interacts with DHX37. In terms of processing, citrullinated by PADI4. Ubiquitously expressed.

Its subcellular location is the nucleus. The protein localises to the nucleolus. May be required for ribosome biogenesis. This is U3 small nucleolar RNA-associated protein 14 homolog A (Utp14a) from Mus musculus (Mouse).